Consider the following 139-residue polypeptide: Protein archease (139 aa).

The Ca(2+) site is built by aspartate 12, aspartate 138, and isoleucine 139.

Belongs to the archease family.

Activates the tRNA-splicing ligase complex by facilitating the enzymatic turnover of catalytic subunit RtcB. Acts by promoting the guanylylation of RtcB, a key intermediate step in tRNA ligation. Can also alter the NTP specificity of RtcB such that ATP, dGTP or ITP is used efficiently. The chain is Protein archease from Saccharolobus islandicus (strain Y.N.15.51 / Yellowstone #2) (Sulfolobus islandicus).